The sequence spans 244 residues: 5-oxoprolinase subunit A (244 aa).

The protein belongs to the LamB/PxpA family. As to quaternary structure, forms a complex composed of PxpA, PxpB and PxpC.

It carries out the reaction 5-oxo-L-proline + ATP + 2 H2O = L-glutamate + ADP + phosphate + H(+). Its function is as follows. Catalyzes the cleavage of 5-oxoproline to form L-glutamate coupled to the hydrolysis of ATP to ADP and inorganic phosphate. In Salmonella choleraesuis (strain SC-B67), this protein is 5-oxoprolinase subunit A.